The following is a 152-amino-acid chain: Endoribonuclease YbeY (152 aa).

3 residues coordinate Zn(2+): H113, H117, and H123.

This sequence belongs to the endoribonuclease YbeY family. The cofactor is Zn(2+).

It is found in the cytoplasm. In terms of biological role, single strand-specific metallo-endoribonuclease involved in late-stage 70S ribosome quality control and in maturation of the 3' terminus of the 16S rRNA. The polypeptide is Endoribonuclease YbeY (Paracidovorax citrulli (strain AAC00-1) (Acidovorax citrulli)).